Consider the following 168-residue polypeptide: Cyanate hydratase (168 aa).

Residues arginine 91, glutamate 94, and serine 117 contribute to the active site.

Belongs to the cyanase family.

It carries out the reaction cyanate + hydrogencarbonate + 3 H(+) = NH4(+) + 2 CO2. In terms of biological role, catalyzes the reaction of cyanate with bicarbonate to produce ammonia and carbon dioxide. This chain is Cyanate hydratase, found in Arabidopsis thaliana (Mouse-ear cress).